A 494-amino-acid polypeptide reads, in one-letter code: BUB3-interacting and GLEBS motif-containing protein ZNF207 (494 aa).

The interval 1-92 is microtubule-binding region; sequence MGRKKKKQLK…EGIPEKDMDE (92 aa). 2 C2H2-type zinc fingers span residues 11 to 34 and 35 to 58; these read PWCW…KAKH and FKCH…MQVH. Over residues 100-111 the composition is skewed to basic and acidic residues; the sequence is KTQESQKKKQQD. 3 disordered regions span residues 100-161, 250-377, and 455-494; these read KTQE…PGIP, NRPP…SATS, and LPGA…GGRY. The segment covering 112-121 has biased composition (acidic residues); that stretch reads DSDEYDDDDS. Over residues 127 to 136 the composition is skewed to polar residues; sequence FQPQPVQPQQ. Residues 142–161 are compositionally biased toward pro residues; that stretch reads MAQPGLPPVPGAPGMPPGIP. Residues 283–300 show a composition bias toward low complexity; the sequence is SSSTASSNSESLSASSKA. The span at 323 to 332 shows a compositional bias: polar residues; it reads LNSTPATSTE. Positions 342–377 are enriched in low complexity; that stretch reads TQSTASTTSTTNSTAAKPAASITSKPATLTTTSATS. The GLEBS stretch occupies residues 375–407; the sequence is ATSKLIHPDEDISLEERRAQLPKYQRNLPRPGQ. The span at 463 to 483 shows a compositional bias: pro residues; it reads GQGPPMVPPYQGGPPRPPMGM.

Interacts (via GLEBS region) with BUB3.

It is found in the nucleus. Its subcellular location is the chromosome. It localises to the centromere. The protein localises to the kinetochore. The protein resides in the cytoplasm. It is found in the cytoskeleton. Its subcellular location is the spindle. Its function is as follows. Kinetochore- and microtubule-binding protein that plays a key role in spindle assembly. ZNF207/BuGZ is mainly composed of disordered low-complexity regions and undergoes phase transition or coacervation to form temperature-dependent liquid droplets. Coacervation promotes microtubule bundling and concentrates tubulin, promoting microtubule polymerization and assembly of spindle and spindle matrix by concentrating its building blocks. Also acts as a regulator of mitotic chromosome alignment by mediating the stability and kinetochore loading of BUB3. Mechanisms by which BUB3 is protected are unclear: according to a first report, ZNF207/BuGZ may act by blocking ubiquitination and proteasomal degradation of BUB3. According to another report, the stabilization is independent of the proteasome. The protein is BUB3-interacting and GLEBS motif-containing protein ZNF207 of Pongo abelii (Sumatran orangutan).